The sequence spans 114 residues: GGSGGSGSSGNFTTASNIHMSSVTNTSIAGTGGTGGTGTGTGTGTGTGTGTGTGTGTGTDTGTGTGTGTETGTGTGTGTRNGTNSGTKTGTASSYRGGGVAIQPVTLTESLLNK.

Residues 23–114 (VTNTSIAGTG…VTLTESLLNK (92 aa)) are disordered. 14 repeat units span residues 30–31 (GT), 33–34 (GT), 36–37 (GT), 38–39 (GT), 40–41 (GT), 42–43 (GT), 44–45 (GT), 46–47 (GT), 48–49 (GT), 50–51 (GT), 52–53 (GT), 54–55 (GT), 56–57 (GT), and 58–59 (GT). Residues 30-79 (GTGGTGGTGTGTGTGTGTGTGTGTGTGTGTDTGTGTGTGTETGTGTGTGT) are compositionally biased toward gly residues. The tract at residues 30-87 (GTGGTGGTGTGTGTGTGTGTGTGTGTGTGTDTGTGTGTGTETGTGTGTGTRNGTNSGT) is 28 X 2 AA approximate tandem repeats of G-[TN]. A 15; approximate repeat occupies 60-61 (DT). Repeat copies occupy residues 62–63 (GT), 64–65 (GT), 66–67 (GT), and 68–69 (GT). One copy of the 20; approximate repeat lies at 70 to 71 (ET). Repeat copies occupy residues 72–73 (GT), 74–75 (GT), 76–77 (GT), and 78–79 (GT). One copy of the 25; approximate repeat lies at 80–81 (RN). A compositionally biased stretch (low complexity) spans 80 to 91 (RNGTNSGTKTGT). Copy 26 of the repeat occupies 82-83 (GT). The stretch at 84-85 (NS) is one 27; approximate repeat. Repeat 28 spans residues 86 to 87 (GT). Positions 105 to 114 (VTLTESLLNK) are enriched in polar residues.

As to quaternary structure, forms a heterodimer with timeless (TIM); the complex then translocates into the nucleus. In terms of processing, phosphorylated with a circadian rhythmicity, probably by the double-time protein (dbt). Phosphorylation could be implicated in the stability of per monomer and in the formation of heterodimer per-tim.

The protein resides in the nucleus. The protein localises to the cytoplasm. Its subcellular location is the perinuclear region. In terms of biological role, essential for biological clock functions. Determines the period length of circadian and ultradian rhythms; an increase in PER dosage leads to shortened circadian rhythms and a decrease leads to lengthened circadian rhythms. Essential for the circadian rhythmicity of locomotor activity, eclosion behavior, and for the rhythmic component of the male courtship song that originates in the thoracic nervous system. The biological cycle depends on the rhythmic formation and nuclear localization of the TIM-PER complex. Light induces the degradation of TIM, which promotes elimination of PER. Nuclear activity of the heterodimer coordinatively regulates PER and TIM transcription through a negative feedback loop. Behaves as a negative element in circadian transcriptional loop. Does not appear to bind DNA, suggesting indirect transcriptional inhibition. This is Period circadian protein (per) from Drosophila orena (Fruit fly).